A 329-amino-acid polypeptide reads, in one-letter code: BTB/POZ domain-containing adapter for CUL3-mediated RhoA degradation protein 1 (329 aa).

Over residues 1–22 (MSAEASGPAAAAAPSLEAPKPS) the composition is skewed to low complexity. Residues 1–31 (MSAEASGPAAAAAPSLEAPKPSGLEPGPAAY) are disordered. One can recognise a BTB domain in the interval 41-109 (KYVKLNVGGS…LRDGSVPLPE (69 aa)). The disordered stretch occupies residues 282 to 303 (ATGGAAGAGGAGRGEDEENREH).

This sequence belongs to the BACURD family. Homotetramer; forms a two-fold symmetric tetramer in solution. Interacts with CUL3; interaction is direct and forms a 5:5 heterodecamer. Component of the BCR(KCTD13) E3 ubiquitin ligase complex, at least composed of CUL3, KCTD13/BACURD1 and RBX1. Interacts with RHOA; with a preference for RhoA-GDP. Interacts with POLD2 and PCNA. Interacts with SPRTN. In terms of tissue distribution, expressed in a wide variety of tissues.

Its subcellular location is the nucleus. Its pathway is protein modification; protein ubiquitination. Functionally, substrate-specific adapter of a BCR (BTB-CUL3-RBX1) E3 ubiquitin-protein ligase complex required for synaptic transmission. The BCR(KCTD13) E3 ubiquitin ligase complex mediates the ubiquitination of RHOA, leading to its degradation by the proteasome Degradation of RHOA regulates the actin cytoskeleton and promotes synaptic transmission. This Homo sapiens (Human) protein is BTB/POZ domain-containing adapter for CUL3-mediated RhoA degradation protein 1 (KCTD13).